We begin with the raw amino-acid sequence, 484 residues long: Protein nucleotidyltransferase YdiU (484 aa).

ATP-binding residues include Gly-81, Gly-83, Arg-84, Lys-103, Asp-115, Gly-116, Arg-166, and Arg-173. The Proton acceptor role is filled by Asp-244. Residues Asn-245 and Asp-254 each contribute to the Mg(2+) site. Residue Asp-254 coordinates ATP.

Belongs to the SELO family. It depends on Mg(2+) as a cofactor. Requires Mn(2+) as cofactor.

The enzyme catalyses L-seryl-[protein] + ATP = 3-O-(5'-adenylyl)-L-seryl-[protein] + diphosphate. It carries out the reaction L-threonyl-[protein] + ATP = 3-O-(5'-adenylyl)-L-threonyl-[protein] + diphosphate. The catalysed reaction is L-tyrosyl-[protein] + ATP = O-(5'-adenylyl)-L-tyrosyl-[protein] + diphosphate. It catalyses the reaction L-histidyl-[protein] + UTP = N(tele)-(5'-uridylyl)-L-histidyl-[protein] + diphosphate. The enzyme catalyses L-seryl-[protein] + UTP = O-(5'-uridylyl)-L-seryl-[protein] + diphosphate. It carries out the reaction L-tyrosyl-[protein] + UTP = O-(5'-uridylyl)-L-tyrosyl-[protein] + diphosphate. Functionally, nucleotidyltransferase involved in the post-translational modification of proteins. It can catalyze the addition of adenosine monophosphate (AMP) or uridine monophosphate (UMP) to a protein, resulting in modifications known as AMPylation and UMPylation. The protein is Protein nucleotidyltransferase YdiU of Shewanella baltica (strain OS155 / ATCC BAA-1091).